Here is a 233-residue protein sequence, read N- to C-terminus: MVRGRTELKRIENPTSRQVTFSKRRNGLLKKAFELSVLCDAEVALIVFSPRGRLYEFASAPSLQKTIDRYKAYTKDHVNNKTIQQDIQQVKDDTLGLAKKLEALDESRRKILGENLEGFSIEELRGLEMKLEKSLHKIRLKKTELLEQQIAKLKEKERTLLKDNENLRGKHRNLEAAALVANHMTTTTAPAAWPRDVPMTSSTAGAADAMDVETDLYIGLPGTERSSNRSETG.

The region spanning 1–61 (MVRGRTELKR…GRLYEFASAP (61 aa)) is the MADS-box domain. The region spanning 87–177 (IQQVKDDTLG…RGKHRNLEAA (91 aa)) is the K-box domain.

The protein resides in the nucleus. Functionally, probable transcription factor. The chain is MADS-box transcription factor 56 (MADS56) from Oryza sativa subsp. japonica (Rice).